Consider the following 215-residue polypeptide: Probable transaldolase 1 (215 aa).

Catalysis depends on lysine 83, which acts as the Schiff-base intermediate with substrate.

This sequence belongs to the transaldolase family. Type 3B subfamily.

It localises to the cytoplasm. It carries out the reaction D-sedoheptulose 7-phosphate + D-glyceraldehyde 3-phosphate = D-erythrose 4-phosphate + beta-D-fructose 6-phosphate. Its pathway is carbohydrate degradation; pentose phosphate pathway; D-glyceraldehyde 3-phosphate and beta-D-fructose 6-phosphate from D-ribose 5-phosphate and D-xylulose 5-phosphate (non-oxidative stage): step 2/3. Transaldolase is important for the balance of metabolites in the pentose-phosphate pathway. The chain is Probable transaldolase 1 from Bacillus cereus (strain ATCC 14579 / DSM 31 / CCUG 7414 / JCM 2152 / NBRC 15305 / NCIMB 9373 / NCTC 2599 / NRRL B-3711).